The chain runs to 244 residues: Tegument protein UL51 homolog (244 aa).

Cysteine 10 is lipidated: S-palmitoyl cysteine; by host.

The protein belongs to the herpesviridae UL51 family. In terms of assembly, oligomerizes. Interacts with ORF55; this interaction mediates ORF55 incorporation to virions. Phosphorylated. In terms of processing, palmitoylation is necessary for Golgi localization.

It localises to the virion tegument. Its subcellular location is the host cytoplasm. The protein resides in the host Golgi apparatus. In terms of biological role, plays several roles during the time course of infection, including egress of virus particles from the perinuclear space and secondary envelopment of cytoplasmic capsids that bud into specific trans-Golgi network (TGN)-derived membranes. The protein is Tegument protein UL51 homolog (8) of Equus caballus (Horse).